Here is a 93-residue protein sequence, read N- to C-terminus: Protein S100-A8 (93 aa).

EF-hand domains lie at 12–47 (IIDV…QYIR) and 46–81 (IRKK…MGVA). The Zn(2+) site is built by His-17 and His-27. Asp-33 serves as a coordination point for Ca(2+). The residue at position 42 (Cys-42) is an S-nitrosocysteine. Residues Asp-59, Asn-61, Asp-63, and Glu-70 each contribute to the Ca(2+) site. Positions 83 and 87 each coordinate Zn(2+).

It belongs to the S-100 family. In terms of assembly, homodimer. Preferentially exists as a heterodimer or heterotetramer with S100A9 known as calprotectin (S100A8/A9). S100A8 interacts with AGER, ATP2A2 and with the heterodimeric complex formed by TLR4 and LY96. Interacts with GAPDH. Calprotectin (S100A8/9) interacts with CEACAM3 and tubulin filaments in a calcium-dependent manner. Heterotetrameric calprotectin (S100A8/A9) interacts with ANXA6 and associates with tubulin filaments in activated monocytes. S100A8 and calprotectin (S100A8/9) interact with NCF2/P67PHOX, RAC1 and RAC2. Calprotectin (S100A8/9) interacts with CYBA and CYBB. Calprotectin (S100A8/9) interacts with NOS2 to form the iNOS-S100A8/A9 transnitrosylase complex; induced by LDL(ox). Calprotectin (S100A8/9) interacts with CD69. In terms of tissue distribution, calprotectin (S100A8/9) is predominantly expressed in myeloid cells. Except for inflammatory conditions, the expression is restricted to a specific stage of myeloid differentiation since both proteins are expressed in circulating neutrophils and monocytes but are absent in normal tissue macrophages and lymphocytes. Under chronic inflammatory conditions, such as psoriasis and malignant disorders, also expressed in the epidermis. Found in high concentrations at local sites of inflammation or in the serum of patients with inflammatory diseases such as rheumatoid, cystic fibrosis, inflammatory bowel disease, Crohn's disease, giant cell arteritis, cystic fibrosis, Sjogren's syndrome, systemic lupus erythematosus, and progressive systemic sclerosis. Involved in the formation and deposition of amyloids in the aging prostate known as corpora amylacea inclusions. Strongly up-regulated in many tumors, including gastric, esophageal, colon, pancreatic, bladder, ovarian, thyroid, breast and skin cancers.

Its subcellular location is the secreted. It localises to the cytoplasm. The protein localises to the cytoskeleton. The protein resides in the cell membrane. Calprotectin (S100A8/A9) activity on TLR4 signaling is inhibited by paquinimod. Functionally, S100A8 is a calcium- and zinc-binding protein which plays a prominent role in the regulation of inflammatory processes and immune response. It can induce neutrophil chemotaxis and adhesion. Predominantly found as calprotectin (S100A8/A9) which has a wide plethora of intra- and extracellular functions. The intracellular functions include: facilitating leukocyte arachidonic acid trafficking and metabolism, modulation of the tubulin-dependent cytoskeleton during migration of phagocytes and activation of the neutrophilic NADPH-oxidase. Also participates in regulatory T-cell differentiation together with CD69. Activates NADPH-oxidase by facilitating the enzyme complex assembly at the cell membrane, transferring arachidonic acid, an essential cofactor, to the enzyme complex and S100A8 contributes to the enzyme assembly by directly binding to NCF2/P67PHOX. The extracellular functions involve pro-inflammatory, antimicrobial, oxidant-scavenging and apoptosis-inducing activities. Its pro-inflammatory activity includes recruitment of leukocytes, promotion of cytokine and chemokine production, and regulation of leukocyte adhesion and migration. Acts as an alarmin or a danger associated molecular pattern (DAMP) molecule and stimulates innate immune cells via binding to pattern recognition receptors such as Toll-like receptor 4 (TLR4) and receptor for advanced glycation endproducts (AGER). Binding to TLR4 and AGER activates the MAP-kinase and NF-kappa-B signaling pathways resulting in the amplification of the pro-inflammatory cascade. Has antimicrobial activity towards bacteria and fungi and exerts its antimicrobial activity probably via chelation of Zn(2+) which is essential for microbial growth. Can induce cell death via autophagy and apoptosis and this occurs through the cross-talk of mitochondria and lysosomes via reactive oxygen species (ROS) and the process involves BNIP3. Can regulate neutrophil number and apoptosis by an anti-apoptotic effect; regulates cell survival via ITGAM/ITGB and TLR4 and a signaling mechanism involving MEK-ERK. Its role as an oxidant scavenger has a protective role in preventing exaggerated tissue damage by scavenging oxidants. Can act as a potent amplifier of inflammation in autoimmunity as well as in cancer development and tumor spread. The iNOS-S100A8/A9 transnitrosylase complex directs selective inflammatory stimulus-dependent S-nitrosylation of GAPDH and probably multiple targets such as ANXA5, EZR, MSN and VIM by recognizing a [IL]-x-C-x-x-[DE] motif; S100A8 seems to contribute to S-nitrosylation site selectivity. Its function is as follows. (Microbial infection) Upon infection by human coronavirus SARS-CoV-2, may induce expansion of aberrant immature neutrophils in a TLR4-dependent manner. In Homo sapiens (Human), this protein is Protein S100-A8.